The primary structure comprises 202 residues: Heat shock 22 kDa protein, mitochondrial (202 aa).

A mitochondrion-targeting transit peptide spans 1–31 (MASSLALKRFLSSGLLSSSFLRPVASSASRS). Residues 94–202 (VLSAASRRGW…RNNVINVKVD (109 aa)) form the sHSP domain.

Belongs to the small heat shock protein (HSP20) family.

The protein localises to the mitochondrion. The chain is Heat shock 22 kDa protein, mitochondrial (HSP22) from Pisum sativum (Garden pea).